Consider the following 314-residue polypeptide: Ribonuclease Z (314 aa).

Histidine 62, histidine 64, aspartate 66, histidine 67, histidine 144, aspartate 215, and histidine 273 together coordinate Zn(2+). The active-site Proton acceptor is the aspartate 66.

It belongs to the RNase Z family. Homodimer. The cofactor is Zn(2+).

It catalyses the reaction Endonucleolytic cleavage of RNA, removing extra 3' nucleotides from tRNA precursor, generating 3' termini of tRNAs. A 3'-hydroxy group is left at the tRNA terminus and a 5'-phosphoryl group is left at the trailer molecule.. Zinc phosphodiesterase, which displays some tRNA 3'-processing endonuclease activity. Probably involved in tRNA maturation, by removing a 3'-trailer from precursor tRNA. This chain is Ribonuclease Z, found in Prochlorococcus marinus (strain NATL2A).